Reading from the N-terminus, the 444-residue chain is MTRKYFGTDGIRGTVGQSPITPDFALRLAHAVGRVLRRTQERPTVLIGKDTRISGYMLESALESGFNSAGVDVVLLGPLPTPGVAYLTRAQRASLGVVISASHNPYPDNGIKFFSAQGTKLPDAWEEEVEAALEQPPVWADSASLGKTRRLDDAAGRYIEFCKSTFANDLTLRGLKIVVDAAHGAAYHIAPKVFHELGAEVMAIGCAPDGLNINHQVGATHPDALVRAVRANHADYGIALDGDADRVQMVDAAGRLFNGDELLYVMVAARLARDEHVPGVVGTLMTNMAVEEALQRRGVKFMRAKVGDRYVLEELQRQHWLLGGEGSGHLLALDRHTTGDGLISALQVLQACVRSGKTLAQLLADVPLFPQVLLNVRLNPGQDWKTNPVLADAIRDAEAELGAHGRVLVRASGTEPLLRVMVEAREAEQANRCAQRMADAARAG.

Ser-102 serves as the catalytic Phosphoserine intermediate. The Mg(2+) site is built by Ser-102, Asp-241, Asp-243, and Asp-245. At Ser-102 the chain carries Phosphoserine.

This sequence belongs to the phosphohexose mutase family. It depends on Mg(2+) as a cofactor. Activated by phosphorylation.

The catalysed reaction is alpha-D-glucosamine 1-phosphate = D-glucosamine 6-phosphate. Its function is as follows. Catalyzes the conversion of glucosamine-6-phosphate to glucosamine-1-phosphate. The chain is Phosphoglucosamine mutase from Acidovorax sp. (strain JS42).